A 259-amino-acid chain; its full sequence is Phosphate import ATP-binding protein PstB (259 aa).

Residues G2–E248 form the ABC transporter domain. An ATP-binding site is contributed by G37 to S44.

This sequence belongs to the ABC transporter superfamily. Phosphate importer (TC 3.A.1.7) family. The complex is composed of two ATP-binding proteins (PstB), two transmembrane proteins (PstC and PstA) and a solute-binding protein (PstS).

It is found in the cell membrane. It catalyses the reaction phosphate(out) + ATP + H2O = ADP + 2 phosphate(in) + H(+). In terms of biological role, part of the ABC transporter complex PstSACB involved in phosphate import. Responsible for energy coupling to the transport system. The sequence is that of Phosphate import ATP-binding protein PstB from Bifidobacterium longum (strain NCC 2705).